Reading from the N-terminus, the 120-residue chain is NADH-ubiquinone oxidoreductase chain 3 (120 aa).

3 consecutive transmembrane segments (helical) span residues 7–27, 62–82, and 89–109; these read FVYI…LFFL, FYLV…LFPF, and MTLL…IGFI.

The protein belongs to the complex I subunit 3 family.

The protein localises to the mitochondrion membrane. It carries out the reaction a ubiquinone + NADH + 5 H(+)(in) = a ubiquinol + NAD(+) + 4 H(+)(out). Its function is as follows. Core subunit of the mitochondrial membrane respiratory chain NADH dehydrogenase (Complex I) that is believed to belong to the minimal assembly required for catalysis. Complex I functions in the transfer of electrons from NADH to the respiratory chain. The immediate electron acceptor for the enzyme is believed to be ubiquinone. This is NADH-ubiquinone oxidoreductase chain 3 (nad3) from Dictyostelium discoideum (Social amoeba).